A 429-amino-acid polypeptide reads, in one-letter code: 5-methylthioadenosine/S-adenosylhomocysteine deaminase (429 aa).

Residues H65 and H67 each coordinate Zn(2+). E94 and H182 together coordinate substrate. Zn(2+) is bound at residue H209. Positions 212 and 297 each coordinate substrate. D297 serves as a coordination point for Zn(2+).

The protein belongs to the metallo-dependent hydrolases superfamily. MTA/SAH deaminase family. It depends on Zn(2+) as a cofactor.

It catalyses the reaction S-adenosyl-L-homocysteine + H2O + H(+) = S-inosyl-L-homocysteine + NH4(+). The catalysed reaction is S-methyl-5'-thioadenosine + H2O + H(+) = S-methyl-5'-thioinosine + NH4(+). Catalyzes the deamination of 5-methylthioadenosine and S-adenosyl-L-homocysteine into 5-methylthioinosine and S-inosyl-L-homocysteine, respectively. Is also able to deaminate adenosine. This is 5-methylthioadenosine/S-adenosylhomocysteine deaminase from Clostridium tetani (strain Massachusetts / E88).